The chain runs to 1132 residues: MGMACLTMTEMEGTSTSSIYQNGDISGNANSMKQIDPVLQVYLYHSLGKSEADYLTFPSGEYVAEEICIAASKACGITPVYHNMFALMSETERIWYPPNHVFHIDESTRHNVLYRIRFYFPRWYCSGSNRAYRHGISRGAEAPLLDDFVMSYLFAQWRHDFVHGWIKVPVTHETQEECLGMAVLDMMRIAKENDQTPLAIYNSISYKTFLPKCIRAKIQDYHILTRKRIRYRFRRFIQQFSQCKATARNLKLKYLINLETLQSAFYTEKFEVKEPGSGPSGEEIFATIIITGNGGIQWSRGKHKESETLTEQDLQLYCDFPNIIDVSIKQANQEGSNESRVVTIHKQDGKNLEIELSSLREALSFVSLIDGYYRLTADAHHYLCKEVAPPAVLENIQSNCHGPISMDFAISKLKKAGNQTGLYVLRCSPKDFNKYFLTFAVERENVIEYKHCLITKNENEEYNLSGTKKNFSSLKDLLNCYQMETVRSDNIIFQFTKCCPPKPKDKSNLLVFRTNGVSDVPTSPTLQRPTHMNQMVFHKIRNEDLIFNESLGQGTFTKIFKGVRREVGDYGQLHETEVLLKVLDKAHRNYSESFFEAASMMSKLSHKHLVLNYGVCVCGDENILVQEFVKFGSLDTYLKKNKNCINILWKLEVAKQLAWAMHFLEENTLIHGNVCAKNILLIREEDRKTGNPPFIKLSDPGISITVLPKDILQERIPWVPPECIENPKNLNLATDKWSFGTTLWEICSGGDKPLSALDSQRKLQFYEDRHQLPAPKWAELANLINNCMDYEPDFRPSFRAIIRDLNSLFTPDYELLTENDMLPNMRIGALGFSGAFEDRDPTQFEERHLKFLQQLGKGNFGSVEMCRYDPLQDNTGEVVAVKKLQHSTEEHLRDFEREIEILKSLQHDNIVKYKGVCYSAGRRNLKLIMEYLPYGSLRDYLQKHKERIDHIKLLQYTSQICKGMEYLGTKRYIHRDLATRNILVENENRVKIGDFGLTKVLPQDKEYYKVKEPGESPIFWYAPESLTESKFSVASDVWSFGVVLYELFTYIEKSKSPPAEFMRMIGNDKQGQMIVFHLIELLKNNGRLPRPDGCPDEIYMIMTECWNNNVNQRPSFRDLALRVDQIRDNMAG.

The tract at residues 1 to 239 (MGMACLTMTE…RYRFRRFIQQ (239 aa)) is interaction with cytokine/interferon/growth hormone receptors. One can recognise an FERM domain in the interval 37–380 (PVLQVYLYHS…GYYRLTADAH (344 aa)). Phosphotyrosine; by autocatalysis is present on Y119. 2 positions are modified to phosphotyrosine: Y372 and Y373. The region spanning 401 to 482 (HGPISMDFAI…SLKDLLNCYQ (82 aa)) is the SH2; atypical domain. S523 is modified (phosphoserine). The region spanning 545–809 (LIFNESLGQG…AIIRDLNSLF (265 aa)) is the Protein kinase 1 domain. Phosphotyrosine occurs at positions 570 and 813. Residues 849 to 1124 (LKFLQQLGKG…SFRDLALRVD (276 aa)) form the Protein kinase 2 domain. 855-863 (LGKGNFGSV) contacts ATP. Y868 carries the phosphotyrosine; by autocatalysis modification. K882 provides a ligand contact to ATP. Phosphotyrosine; by autocatalysis occurs at positions 966 and 972. D976 acts as the Proton acceptor in catalysis. Residues Y1007 and Y1008 each carry the phosphotyrosine; by autocatalysis modification.

This sequence belongs to the protein kinase superfamily. Tyr protein kinase family. JAK subfamily. In terms of assembly, interacts with EPOR, LYN, SIRPA, SH2B1 and TEC. Interacts with IL23R. Interacts with SKB1. Interacts with STAM2. Interacts with IFNGR2 (via intracellular domain). Interacts with LEPR (Isoform B). Interacts with HSP90AB1; promotes functional activation in a heat shock-dependent manner. Interacts with STRA6. Interacts with RHEX; this interaction occurs in a erythropoietin (EPO)-dependent manner. Interacts with ASB2; the interaction targets JAK2 for Notch-induced proteasomal degradation. Interacts with MPL/TPOR. Mg(2+) is required as a cofactor. Post-translationally, autophosphorylated, leading to regulate its activity. Leptin promotes phosphorylation on tyrosine residues, including phosphorylation on Tyr-813. Autophosphorylation on Tyr-119 in response to EPO down-regulates its kinase activity. Autophosphorylation on Tyr-868, Tyr-966 and Tyr-972 in response to growth hormone (GH) are required for maximal kinase activity. Also phosphorylated by TEC. Phosphorylated on tyrosine residues in response to interferon gamma signaling. Phosphorylated on tyrosine residues in response to a signaling cascade that is activated by increased cellular retinol. Undergoes Notch-induced ubiquitination and subsequent proteasomal degradation which is mediated by ASB1 or ASB2, the substrate-recognition components of probable ECS E3 ubiquitin-protein ligase complexes. As to expression, ubiquitously expressed throughout most tissues.

The protein localises to the endomembrane system. Its subcellular location is the cytoplasm. It localises to the nucleus. The enzyme catalyses L-tyrosyl-[protein] + ATP = O-phospho-L-tyrosyl-[protein] + ADP + H(+). With respect to regulation, regulated by autophosphorylation, can both activate or decrease activity. Heme regulates its activity by enhancing the phosphorylation on Tyr-1007 and Tyr-1008. Its function is as follows. Non-receptor tyrosine kinase involved in various processes such as cell growth, development, differentiation or histone modifications. Mediates essential signaling events in both innate and adaptive immunity. In the cytoplasm, plays a pivotal role in signal transduction via its association with type I receptors such as growth hormone (GHR), prolactin (PRLR), leptin (LEPR), erythropoietin (EPOR), thrombopoietin receptor (MPL/TPOR); or type II receptors including IFN-alpha, IFN-beta, IFN-gamma and multiple interleukins. Following ligand-binding to cell surface receptors, phosphorylates specific tyrosine residues on the cytoplasmic tails of the receptor, creating docking sites for STATs proteins. Subsequently, phosphorylates the STATs proteins once they are recruited to the receptor. Phosphorylated STATs then form homodimer or heterodimers and translocate to the nucleus to activate gene transcription. For example, cell stimulation with erythropoietin (EPO) during erythropoiesis leads to JAK2 autophosphorylation, activation, and its association with erythropoietin receptor (EPOR) that becomes phosphorylated in its cytoplasmic domain. Then, STAT5 (STAT5A or STAT5B) is recruited, phosphorylated and activated by JAK2. Once activated, dimerized STAT5 translocates into the nucleus and promotes the transcription of several essential genes involved in the modulation of erythropoiesis. Part of a signaling cascade that is activated by increased cellular retinol and that leads to the activation of STAT5 (STAT5A or STAT5B). In addition, JAK2 mediates angiotensin-2-induced ARHGEF1 phosphorylation. Plays a role in cell cycle by phosphorylating CDKN1B. Cooperates with TEC through reciprocal phosphorylation to mediate cytokine-driven activation of FOS transcription. In the nucleus, plays a key role in chromatin by specifically mediating phosphorylation of 'Tyr-41' of histone H3 (H3Y41ph), a specific tag that promotes exclusion of CBX5 (HP1 alpha) from chromatin. Up-regulates the potassium voltage-gated channel activity of KCNA3. This Homo sapiens (Human) protein is Tyrosine-protein kinase JAK2.